A 636-amino-acid polypeptide reads, in one-letter code: tRNA uridine 5-carboxymethylaminomethyl modification enzyme MnmG (636 aa).

Position 18 to 23 (18 to 23 (GAGHAG)) interacts with FAD. Position 281 to 295 (281 to 295 (GPRYCPSIEDKIVRF)) interacts with NAD(+).

Belongs to the MnmG family. Homodimer. Heterotetramer of two MnmE and two MnmG subunits. FAD serves as cofactor.

The protein localises to the cytoplasm. NAD-binding protein involved in the addition of a carboxymethylaminomethyl (cmnm) group at the wobble position (U34) of certain tRNAs, forming tRNA-cmnm(5)s(2)U34. This chain is tRNA uridine 5-carboxymethylaminomethyl modification enzyme MnmG, found in Lactiplantibacillus plantarum (strain ATCC BAA-793 / NCIMB 8826 / WCFS1) (Lactobacillus plantarum).